The chain runs to 114 residues: Large ribosomal subunit protein uL22c (114 aa).

It belongs to the universal ribosomal protein uL22 family. Part of the 50S ribosomal subunit.

It is found in the plastid. Its subcellular location is the cyanelle. In terms of biological role, this protein binds specifically to 23S rRNA. The globular domain of the protein is located near the polypeptide exit tunnel on the outside of the subunit, while an extended beta-hairpin is found that lines the wall of the exit tunnel in the center of the 70S ribosome. The chain is Large ribosomal subunit protein uL22c (rpl22) from Cyanophora paradoxa.